A 205-amino-acid polypeptide reads, in one-letter code: MSDIVWHQHSIDKQSRADQKGQKPILLWFTGLSGSGKSTLAGALERALFDAGFHTYLLDGDNVRHGLCKDLGFSLDDRDENLRRVGEVAKLMVDAGLVVLSAFISPTRAERERVRALFDDGQFIEVHVSTPIEVCEARDPKGLYSKARAGEIKNFTGISASYEVPTAAELIIDTSKGDLATQVSALLDYLAAIQVIDSEKLKKAI.

Position 31-38 (31-38 (GLSGSGKS)) interacts with ATP. Serine 105 functions as the Phosphoserine intermediate in the catalytic mechanism.

Belongs to the APS kinase family.

The catalysed reaction is adenosine 5'-phosphosulfate + ATP = 3'-phosphoadenylyl sulfate + ADP + H(+). It functions in the pathway sulfur metabolism; hydrogen sulfide biosynthesis; sulfite from sulfate: step 2/3. In terms of biological role, catalyzes the synthesis of activated sulfate. This is Adenylyl-sulfate kinase from Shewanella halifaxensis (strain HAW-EB4).